The sequence spans 196 residues: MIIFTATLIIILAYFLGSISGSILICKTLHFKDPRQHGSKNPGTTNILRIINYKIAIFVLLFDSLKGAVPIWLGTYFHIDPIYLYIIAISACIGHIYPIYFQFYGGKGVATAFGALTAISINFFIIIIITWILTVYLFRYASLGSIVTFIVITFYVWYIQYHHFEYIILLSLIILSQHKNNIKRLWNHQEKHIWNR.

5 consecutive transmembrane segments (helical) span residues 1–21, 55–75, 81–101, 118–138, and 140–160; these read MIIF…SISG, IAIF…WLGT, PIYL…PIYF, AISI…VYLF, and YASL…WYIQ.

The protein belongs to the PlsY family. In terms of assembly, probably interacts with PlsX.

The protein localises to the cell inner membrane. It catalyses the reaction an acyl phosphate + sn-glycerol 3-phosphate = a 1-acyl-sn-glycero-3-phosphate + phosphate. Its pathway is lipid metabolism; phospholipid metabolism. Its function is as follows. Catalyzes the transfer of an acyl group from acyl-phosphate (acyl-PO(4)) to glycerol-3-phosphate (G3P) to form lysophosphatidic acid (LPA). This enzyme utilizes acyl-phosphate as fatty acyl donor, but not acyl-CoA or acyl-ACP. This Blochmanniella floridana protein is Glycerol-3-phosphate acyltransferase.